Reading from the N-terminus, the 491-residue chain is Pentatricopeptide repeat-containing protein At5g27460 (491 aa).

10 PPR repeats span residues 69 to 99, 105 to 139, 142 to 176, 177 to 211, 212 to 246, 248 to 278, 283 to 313, 318 to 348, 353 to 387, and 388 to 426; these read SLSE…MENQ, SVYD…SVSM, AKSA…GFLV, TPHP…KIPR, NVLS…KSVE, GWSS…AEKM, NRLG…SKSV, SCVN…WEAQ, DVRV…GGTP, and NYKT…HWRP.

It belongs to the PPR family. P subfamily.

The sequence is that of Pentatricopeptide repeat-containing protein At5g27460 from Arabidopsis thaliana (Mouse-ear cress).